Consider the following 79-residue polypeptide: Translation initiation factor IF-1, chloroplastic (79 aa).

The S1-like domain occupies 1–74 (MTRKNIDLIE…HRGRITFRLR (74 aa)).

This sequence belongs to the IF-1 family. As to quaternary structure, component of the 30S ribosomal translation pre-initiation complex which assembles on the 30S ribosome in the order IF-2 and IF-3, IF-1 and N-formylmethionyl-tRNA(fMet); mRNA recruitment can occur at any time during PIC assembly.

Its subcellular location is the plastid. It localises to the chloroplast. One of the essential components for the initiation of protein synthesis. Stabilizes the binding of IF-2 and IF-3 on the 30S subunit to which N-formylmethionyl-tRNA(fMet) subsequently binds. Helps modulate mRNA selection, yielding the 30S pre-initiation complex (PIC). Upon addition of the 50S ribosomal subunit IF-1, IF-2 and IF-3 are released leaving the mature 70S translation initiation complex. The polypeptide is Translation initiation factor IF-1, chloroplastic (Chlorella vulgaris (Green alga)).